The chain runs to 381 residues: Chaperone protein DnaJ (381 aa).

Positions 5-70 constitute a J domain; sequence DFYEVLGVGR…QKKAAYDQYG (66 aa). The CR-type zinc-finger motif lies at 136–214; sequence GVSKEIEVPT…CHGQGRKQKT (79 aa). 8 residues coordinate Zn(2+): C149, C152, C166, C169, C188, C191, C202, and C205. CXXCXGXG motif repeat units lie at residues 149-156, 166-173, 188-195, and 202-209; these read CDTCDGSG, CGTCHGHG, CPTCHGKG, and CNECHGQG.

The protein belongs to the DnaJ family. As to quaternary structure, homodimer. The cofactor is Zn(2+).

The protein localises to the cytoplasm. In terms of biological role, participates actively in the response to hyperosmotic and heat shock by preventing the aggregation of stress-denatured proteins and by disaggregating proteins, also in an autonomous, DnaK-independent fashion. Unfolded proteins bind initially to DnaJ; upon interaction with the DnaJ-bound protein, DnaK hydrolyzes its bound ATP, resulting in the formation of a stable complex. GrpE releases ADP from DnaK; ATP binding to DnaK triggers the release of the substrate protein, thus completing the reaction cycle. Several rounds of ATP-dependent interactions between DnaJ, DnaK and GrpE are required for fully efficient folding. Also involved, together with DnaK and GrpE, in the DNA replication of plasmids through activation of initiation proteins. This chain is Chaperone protein DnaJ, found in Vibrio campbellii (strain ATCC BAA-1116).